Reading from the N-terminus, the 236-residue chain is MKKPLLLTLLCMILAGCDNPKSLESFTPEMASFSNEFDFDPLRGPVKDFSQTLMSENGEVAKQVTGTLSQEGCFDTLELHDLENNTGLALVLDANYYRDAQTLEKKVQLQGKCQLAALPSAGVTWETDDNGFVVSATGKEMKVEYRYDSEGYPVGKTTINSQNRLSVTAKPSANPRKKLDYTAVSRVDDRQVGNVTQSCEYDAYANPVDCRLVIVDESVKPAVSHHYTIKNRIDYY.

The N-terminal stretch at 1 to 16 is a signal peptide; the sequence is MKKPLLLTLLCMILAG. The N-palmitoyl cysteine moiety is linked to residue Cys-17. A lipid anchor (S-diacylglycerol cysteine) is attached at Cys-17.

Belongs to the UPF0257 family.

Its subcellular location is the cell membrane. The protein is UPF0257 lipoprotein YnfC of Salmonella heidelberg (strain SL476).